The sequence spans 453 residues: Oocyte zinc finger protein XlCOF6 (453 aa).

14 C2H2-type zinc fingers span residues 6–29 (FICS…CGKH), 67–89 (FTCT…HKTH), 95–117 (FTCM…YKAH), 123–145 (VRCT…KRLH), 151–173 (FTCT…HKTH), 179–201 (FACT…QRTH), 207–229 (FTCT…RRTH), 235–257 (FTCT…HKTH), 263–285 (FTCT…QITH), 291–313 (FTCT…HKTH), 319–341 (FACT…QRTH), 375–397 (FTCT…HKTH), 403–425 (FTCT…QRTH), and 431–453 (FTCT…RITH).

This sequence belongs to the krueppel C2H2-type zinc-finger protein family.

The protein resides in the nucleus. Functionally, may be involved in transcriptional regulation. The sequence is that of Oocyte zinc finger protein XlCOF6 from Xenopus laevis (African clawed frog).